We begin with the raw amino-acid sequence, 436 residues long: 3-ketoacyl-CoA thiolase (436 aa).

The active-site Acyl-thioester intermediate is the C99. Residues H392 and C422 each act as proton acceptor in the active site.

This sequence belongs to the thiolase-like superfamily. Thiolase family. In terms of assembly, heterotetramer of two alpha chains (FadJ) and two beta chains (FadI).

Its subcellular location is the cytoplasm. It carries out the reaction an acyl-CoA + acetyl-CoA = a 3-oxoacyl-CoA + CoA. It functions in the pathway lipid metabolism; fatty acid beta-oxidation. Catalyzes the final step of fatty acid oxidation in which acetyl-CoA is released and the CoA ester of a fatty acid two carbons shorter is formed. The polypeptide is 3-ketoacyl-CoA thiolase (Escherichia coli (strain ATCC 8739 / DSM 1576 / NBRC 3972 / NCIMB 8545 / WDCM 00012 / Crooks)).